Consider the following 238-residue polypeptide: uncharacterized protein (238 aa).

This is an uncharacterized protein from Acheta domesticus (House cricket).